Consider the following 78-residue polypeptide: Chondrosarcoma-associated gene 1 protein (78 aa).

The N-terminal stretch at 1–19 is a signal peptide; it reads MSATTACWPAFTVLGEARG. The tract at residues 35 to 78 is disordered; it reads KMSRKPRASSPFSNNHPSTPKRFPRQPRREKGPVKEVPGTKGSP.

As to expression, expressed in chondrosarcoma, melanoma, cartilage and testis, but not in other normal tissues.

It is found in the cytoplasm. The protein localises to the cytoskeleton. It localises to the microtubule organizing center. The protein resides in the centrosome. Its subcellular location is the spindle pole. In terms of biological role, may play an important role in maintaining centrosome integrity during mitosis. The chain is Chondrosarcoma-associated gene 1 protein from Homo sapiens (Human).